Here is a 353-residue protein sequence, read N- to C-terminus: MTQFKQLSFWSDAEPLECVTRTPEAPNVVTFSFQSPSGALFNHDPGQFVTLELPAPGGPLYRTYTISSAPSRPTALTITVKAQDGSTGTRWMLDNLHKGMRIRAIGPAGKFSIVHHPADKYLFISAGSGITPMVAMTTWLYDSGREPDVVFINCARRPSEIILRDRMELMASRIVGIDLKWVVEEPDPFRSWTGYRGMFNQIMLGLMAQDYLEREVFCCGPEPFMRAVREALAGLGYDMSRYHQESFTAEPGHAEDVPEDVIPDEQNHAEIAFALSGVTTRCSETDTILAAAKAAGLVIPSGCSMGICGTCKVRKTEGQVHMVHNGGITDEDVEDGYILACCSKPLRRVSVEA.

Positions Ser-11–Val-114 constitute an FAD-binding FR-type domain. A 2Fe-2S ferredoxin-type domain is found at Ala-269 to Ala-353. 4 residues coordinate [2Fe-2S] cluster: Cys-303, Cys-308, Cys-311, and Cys-341.

This sequence in the N-terminal section; belongs to the FAD-binding oxidoreductase type 6 family. As to quaternary structure, the system is probably composed of an oxygenase subunit (Stc2) and two reductase subunits (Stc3 and Stc4). The cofactor is FAD. It depends on [2Fe-2S] cluster as a cofactor.

Its function is as follows. Reductase involved in the catabolism of stachydrine (L-proline betaine), a source of carbon and nitrogen. Part of a Rieske-type oxygenase system that catalyzes the demethylation of stachydrine to produce N-methyl-L-proline (monomethylproline). This subunit is probably involved in the transfer of electrons from NAD(P)H to the catalytic subunit Stc2. The polypeptide is Stachydrine N-demethylase reductase subunit Stc4 (Rhizobium meliloti (strain 1021) (Ensifer meliloti)).